The chain runs to 446 residues: Glutamate--tRNA ligase (446 aa).

Residues 9–19 (PSPTGLLHVGN) carry the 'HIGH' region motif. Positions 240-244 (GLSKR) match the 'KMSKS' region motif. Lys243 is an ATP binding site.

The protein belongs to the class-I aminoacyl-tRNA synthetase family. Glutamate--tRNA ligase type 1 subfamily. As to quaternary structure, monomer.

The protein localises to the cytoplasm. The enzyme catalyses tRNA(Glu) + L-glutamate + ATP = L-glutamyl-tRNA(Glu) + AMP + diphosphate. Functionally, catalyzes the attachment of glutamate to tRNA(Glu) in a two-step reaction: glutamate is first activated by ATP to form Glu-AMP and then transferred to the acceptor end of tRNA(Glu). The protein is Glutamate--tRNA ligase of Azospirillum brasilense.